Reading from the N-terminus, the 45-residue chain is Small polypeptide DEVIL 23 (45 aa).

Residues Lys-13–Asp-44 form a required for DVL/RTFL small polypeptide activity region. A helical transmembrane segment spans residues Cys-22–Leu-39.

Belongs to the DVL/RTFL small polypeptides family.

The protein resides in the cell membrane. Its function is as follows. Small polypeptide acting as a regulatory molecule which coordinates cellular responses required for differentiation, growth and development, probably by restricting polar cell proliferation in lateral organs and coordinating socket cell recruitment and differentiation at trichome sites. This is Small polypeptide DEVIL 23 from Arabidopsis thaliana (Mouse-ear cress).